Here is a 555-residue protein sequence, read N- to C-terminus: Urocanate hydratase (555 aa).

NAD(+) is bound by residues 51–52 (GG), Q129, 175–177 (GMG), E195, 262–266 (QTSAH), 272–273 (YL), and Y321. C409 is an active-site residue. G491 serves as a coordination point for NAD(+).

This sequence belongs to the urocanase family. Requires NAD(+) as cofactor.

It is found in the cytoplasm. The enzyme catalyses 4-imidazolone-5-propanoate = trans-urocanate + H2O. Its pathway is amino-acid degradation; L-histidine degradation into L-glutamate; N-formimidoyl-L-glutamate from L-histidine: step 2/3. Its function is as follows. Catalyzes the conversion of urocanate to 4-imidazolone-5-propionate. This chain is Urocanate hydratase, found in Xanthomonas axonopodis pv. citri (strain 306).